Consider the following 866-residue polypeptide: MGLKARRPAGAAGGGGDGGGGGGGAANPAGGDAAAAGDEERKVGLAPGDVEQVTLALGAGADKDGTLLLEGGGRDEGQRRTPQGIGLLAKTPLSRPVKRNNAKYRRIQTLIYDALERPRGWALLYHALVFLIVLGCLILAVLTTFREYETVSGDWLLLLETFAIFIFGAEFALRIWAAGCCCRYKGWRGRLKFARKPLCMLDIFVLIASVPVVAVGNQGNVLATSLRSLRFLQILRMLRMDRRGGTWKLLGSAICAHSKELITAWYIGFLTLILSSFLVYLVEKDVPEVDAQGEEMKEEFETYADALWWGLITLATIGYGDKTPKTWEGRLIAATFSLIGVSFFALPAGILGSGLALKVQEQHRQKHFEKRRKPAAELIQAAWRYYATNPNRIDLVATWRFYESVVSFPFFRKEQLDPAASQKLGLLDRVRLSNPRGSNTKGKLFTPLNVDAIEESPSKEPKPVGSNNKERFRTAFRMKAYAFWQSSEDAGTGDPTAEDRGYGNDFLIEDMIPTLKAAIRAVRILQFRLYKKKFKETLRPYDVKDVIEQYSAGHLDMLSRIKYLQTRIDMIFTPGPPSTPKHKKSQRGAAFTYPSQQSPRNEPYVARPSTSETEDQSMMGKFVKVERQVHDMGKKLDFLVDMHLQHMERLQVHVAGFSPSKGASSPAEAEQKEDRRDADLKTIICNYSETGAPDAPYSFHQVPVDKVGPYGFFAHDPVNLPLGGPSSGKGHATPYAERPTVLPILTLLDSRGSYRSQVELHGPCSDRVSPRQRRSITRDSDTPLSLMSVNHEELERSPSGFSISQDRDDYAFGPSGGSSWMREKRYLAEGETDTDTEPFTPSGSLPLSSTGDGISDSIWTPSGKPT.

The disordered stretch occupies residues 1–42; it reads MGLKARRPAGAAGGGGDGGGGGGGAANPAGGDAAAAGDEERK. Residues 1–120 are Cytoplasmic-facing; that stretch reads MGLKARRPAG…IYDALERPRG (120 aa). Residues 11–25 are compositionally biased toward gly residues; that stretch reads AAGGGGDGGGGGGGA. Residues 26 to 36 show a composition bias toward low complexity; it reads ANPAGGDAAAA. T81 is subject to Phosphothreonine. Residues 121-143 form a helical membrane-spanning segment; sequence WALLYHALVFLIVLGCLILAVLT. Topologically, residues 144–153 are extracellular; sequence TFREYETVSG. A helical transmembrane segment spans residues 154–175; the sequence is DWLLLLETFAIFIFGAEFALRI. Residues 176 to 193 are Cytoplasmic-facing; it reads WAAGCCCRYKGWRGRLKF. Residues 194 to 213 form a helical membrane-spanning segment; the sequence is ARKPLCMLDIFVLIASVPVV. Topologically, residues 214–225 are extracellular; that stretch reads AVGNQGNVLATS. Residues 226–244 form a helical; Voltage-sensor membrane-spanning segment; the sequence is LRSLRFLQILRMLRMDRRG. R243 is an a 1,2-diacyl-sn-glycero-3-phospho-(1D-myo-inositol-4,5-bisphosphate) binding site. The Cytoplasmic portion of the chain corresponds to 245-256; it reads GTWKLLGSAICA. Residues 257–282 traverse the membrane as a helical segment; sequence HSKELITAWYIGFLTLILSSFLVYLV. An a 1,2-diacyl-sn-glycero-3-phospho-(1D-myo-inositol-4,5-bisphosphate)-binding site is contributed by K259. Residues 283–302 are Extracellular-facing; the sequence is EKDVPEVDAQGEEMKEEFET. Residues 303–315 constitute an intramembrane region (pore-forming); it reads YADALWWGLITLA. A Selectivity filter motif is present at residues 316–321; sequence TIGYGD. Residues 316–326 are Extracellular-facing; the sequence is TIGYGDKTPKT. The helical transmembrane segment at 327–353 threads the bilayer; the sequence is WEGRLIAATFSLIGVSFFALPAGILGS. Residues 354-866 are Cytoplasmic-facing; it reads GLALKVQEQH…SIWTPSGKPT (513 aa). Residues 356–537 are mediates interaction with calmodulin; sequence ALKVQEQHRQ…RLYKKKFKET (182 aa). K366 serves as a coordination point for a 1,2-diacyl-sn-glycero-3-phospho-(1D-myo-inositol-4,5-bisphosphate). Disordered regions lie at residues 574 to 617, 656 to 676, and 757 to 866; these read PGPP…EDQS, GFSP…EDRR, and QVEL…GKPT. Residues 837 to 866 show a composition bias toward polar residues; it reads EPFTPSGSLPLSSTGDGISDSIWTPSGKPT.

The protein belongs to the potassium channel family. KQT (TC 1.A.1.15) subfamily. Kv7.3/KCNQ3 sub-subfamily. In terms of assembly, heterotetramer with KCNQ2; forms heterotetrameric native M-channel responsible for the M-current. Interacts with calmodulin; the interaction is calcium-independent, constitutive and participates in the proper assembly of a functional M-channel. Heteromultimer with KCNQ5. May associate with KCNE2. Interacts with IQCJ-SCHIP1. Interacts (via the pore module) with SLC5A3/SMIT1; forms a coregulatory complex that alters ion selectivity, voltage dependence and gating kinetics of the channel. KCNQ2/KCNQ3 are ubiquitinated by NEDD4L. Ubiquitination leads to protein degradation. Degradation induced by NEDD4L is inhibited by USP36.

The protein localises to the cell membrane. It catalyses the reaction K(+)(in) = K(+)(out). It carries out the reaction Rb(+)(in) = Rb(+)(out). The catalysed reaction is Cs(+)(in) = Cs(+)(out). The enzyme catalyses Na(+)(in) = Na(+)(out). Its activity is regulated as follows. Phosphatidylinositol-4,5-bisphosphate (PIP2) potentiates the activation of KCNQ channels by enhancing the electro-mechanical coupling of the voltage-sensing domain (VSD) and the pore-forming domain (PD). In the closed state of the channel, PIP2 is anchored at the S2-S3 loop; upon channel activation, PIP2 interacts with the S4-S5 linker and is involved in channel gating. Calcium suppresses KCNQ2-KCNQ3 channel currents, with calcium-bound calmodulin inducing a change in channel configuration which leads to the reduction of channel affinity for PIP2 and subsequent current suppression. Its function is as follows. Pore-forming subunit of the voltage-gated potassium (Kv) M-channel which is responsible for the M-current, a key controller of neuronal excitability. M-channel is composed of pore-forming subunits KCNQ2 and KCNQ3 assembled as heterotetramers. The native M-current has a slowly activating and deactivating potassium conductance which plays a critical role in determining the subthreshold electrical excitability of neurons as well as the responsiveness to synaptic inputs. M-channel is selectively permeable in vitro to other cations besides potassium, in decreasing order of affinity K(+) &gt; Rb(+) &gt; Cs(+) &gt; Na(+). M-channel association with SLC5A3/SMIT1 alters channel ion selectivity, increasing Na(+) and Cs(+) permeation relative to K(+). Suppressed by activation of M1 muscarinic acetylcholine receptors. KCNQ3 also associates with KCNQ5 to form a functional channel in vitro and may also contribute to the M-current in brain. The protein is Potassium voltage-gated channel subfamily KQT member 3 of Bos taurus (Bovine).